The following is a 208-amino-acid chain: Large ribosomal subunit protein uL3 (208 aa).

An N5-methylglutamine modification is found at Q150.

It belongs to the universal ribosomal protein uL3 family. As to quaternary structure, part of the 50S ribosomal subunit. Forms a cluster with proteins L14 and L19. In terms of processing, methylated by PrmB.

Its function is as follows. One of the primary rRNA binding proteins, it binds directly near the 3'-end of the 23S rRNA, where it nucleates assembly of the 50S subunit. This is Large ribosomal subunit protein uL3 from Buchnera aphidicola subsp. Cinara cedri (strain Cc).